The primary structure comprises 271 residues: Secretagogin (271 aa).

6 EF-hand domains span residues 8–43 (LDAAEFLEIWQRFDADDNGYIEGKELDEFFCHLLKK), 53–88 (KVQGVKDRFMSAYDITADGRLQIQELANMILPEDEN), 100–135 (DNSVEFMRIWRKFDEDSSGFISAVELRNFLQDLFLQ), 144–179 (KLDEYTDTMMKLFNRNKDGRLDLNDLAKILALQENF), 192–227 (ERKSDFETIFAHYDVSKTGALEGPEVDGFVKDMMEL), and 235–271 (VDLDKFRQILLNHCDVNKDGKIQKSELALCLGLKANP). 5 residues coordinate Ca(2+): Asp21, Asp23, Asn25, Tyr27, and Glu32. Ca(2+) contacts are provided by Asp113, Asp115, Ser117, Glu124, Asn159, Asp161, Arg163, Asp168, Asp205, Ser207, Thr209, Glu216, Asp249, Asn251, Asp253, Lys255, and Glu260.

The protein localises to the cytoplasm. This is Secretagogin (scgn) from Xenopus laevis (African clawed frog).